Reading from the N-terminus, the 428-residue chain is Enolase (428 aa).

(2R)-2-phosphoglycerate is bound at residue Gln-163. Catalysis depends on Glu-205, which acts as the Proton donor. Residues Asp-242, Glu-285, and Asp-312 each contribute to the Mg(2+) site. (2R)-2-phosphoglycerate-binding residues include Lys-337, Arg-366, Ser-367, and Lys-388. The Proton acceptor role is filled by Lys-337.

This sequence belongs to the enolase family. The cofactor is Mg(2+).

Its subcellular location is the cytoplasm. It localises to the secreted. It is found in the cell surface. It carries out the reaction (2R)-2-phosphoglycerate = phosphoenolpyruvate + H2O. It functions in the pathway carbohydrate degradation; glycolysis; pyruvate from D-glyceraldehyde 3-phosphate: step 4/5. Its function is as follows. Catalyzes the reversible conversion of 2-phosphoglycerate (2-PG) into phosphoenolpyruvate (PEP). It is essential for the degradation of carbohydrates via glycolysis. This is Enolase from Brevibacillus brevis (strain 47 / JCM 6285 / NBRC 100599).